A 255-amino-acid polypeptide reads, in one-letter code: Ribonuclease PH (255 aa).

Phosphate is bound by residues Arg86 and 124–126 (GTR).

The protein belongs to the RNase PH family. In terms of assembly, homohexameric ring arranged as a trimer of dimers.

It catalyses the reaction tRNA(n+1) + phosphate = tRNA(n) + a ribonucleoside 5'-diphosphate. Functionally, phosphorolytic 3'-5' exoribonuclease that plays an important role in tRNA 3'-end maturation. Removes nucleotide residues following the 3'-CCA terminus of tRNAs; can also add nucleotides to the ends of RNA molecules by using nucleoside diphosphates as substrates, but this may not be physiologically important. Probably plays a role in initiation of 16S rRNA degradation (leading to ribosome degradation) during starvation. In Geobacillus sp. (strain WCH70), this protein is Ribonuclease PH.